Consider the following 346-residue polypeptide: E3 ubiquitin-protein ligase RNF146-A (346 aa).

The segment at 37 to 75 (CAICLQTCVHPVSLPCKHVFCYLCVKGASWLGKRCALCR) adopts an RING-type zinc-finger fold. A WWE domain is found at 91 to 167 (PELKAASRGN…EHGRRRKIKR (77 aa)). 2 disordered regions span residues 195-240 (SSAD…GTSL) and 256-301 (ERSH…ALVA). Residues 202 to 216 (SVPAQSGASVQSSSV) are compositionally biased toward low complexity. Residues 281–295 (SIEETESDASSDSED) show a composition bias toward acidic residues.

In terms of assembly, interacts with poly-ADP-ribosylated AXIN1, AXIN2, BLZF1 and CASC3. In terms of processing, ubiquitinated; autoubiquitinated. Autoubiquitination is enhanced upon poly(ADP-ribose)-binding.

It localises to the cytoplasm. It is found in the cytosol. The enzyme catalyses S-ubiquitinyl-[E2 ubiquitin-conjugating enzyme]-L-cysteine + [acceptor protein]-L-lysine = [E2 ubiquitin-conjugating enzyme]-L-cysteine + N(6)-ubiquitinyl-[acceptor protein]-L-lysine.. It functions in the pathway protein modification; protein ubiquitination. E3 ubiquitin-protein ligase that specifically binds poly-ADP-ribosylated proteins and mediates their ubiquitination and subsequent degradation. Acts as an activator of the Wnt signaling pathway by mediating the ubiquitination of poly-ADP-ribosylated AXIN1 and AXIN2, 2 key components of the beta-catenin destruction complex. Acts in cooperation with tankyrase proteins (TNKS and TNKS2), which mediate poly-ADP-ribosylation of target proteins AXIN1, AXIN2, BLZF1, CASC3, TNKS and TNKS2. Recognizes and binds tankyrase-dependent poly-ADP-ribosylated proteins via its WWE domain and mediates their ubiquitination. This is E3 ubiquitin-protein ligase RNF146-A (RNF146A) from Bos taurus (Bovine).